Reading from the N-terminus, the 240-residue chain is Heme oxygenase 1 (240 aa).

5 residues coordinate heme b: Arg-10, His-17, Tyr-125, Lys-168, and Arg-172.

This sequence belongs to the heme oxygenase family.

The catalysed reaction is heme b + 3 reduced [NADPH--hemoprotein reductase] + 3 O2 = biliverdin IXalpha + CO + Fe(2+) + 3 oxidized [NADPH--hemoprotein reductase] + 3 H2O + H(+). Catalyzes the opening of the heme ring with the release of iron. Key enzyme in the synthesis of the chromophoric part of the photosynthetic antennae. The chain is Heme oxygenase 1 (pbsA1) from Synechocystis sp. (strain ATCC 27184 / PCC 6803 / Kazusa).